Reading from the N-terminus, the 78-residue chain is Large ribosomal subunit protein bL28 (78 aa).

Residues M1–H20 are compositionally biased toward polar residues. Residues M1–I23 form a disordered region.

Belongs to the bacterial ribosomal protein bL28 family.

The sequence is that of Large ribosomal subunit protein bL28 from Prochlorococcus marinus (strain NATL2A).